The sequence spans 171 residues: Myosin regulatory light chain 12B (171 aa).

At threonine 18 the chain carries Phosphothreonine; by MLCK and ZIPK/DAPK3. Phosphoserine; by MLCK and ZIPK/DAPK3 is present on serine 19. EF-hand domains lie at 28 to 63, 97 to 132, and 133 to 168; these read SQIQ…LGKN, DPED…MGDR, and FTDE…GAKD. Ca(2+) is bound by residues aspartate 41, asparagine 43, aspartate 45, and aspartate 52.

In terms of assembly, myosin is a hexamer of 2 heavy chains and 4 light chains: interacts with myosin heavy chain MYO19. In terms of processing, phosphorylation increases the actin-activated myosin ATPase activity and thereby regulates the contractile activity. It is required to generate the driving force in the migration of the cells but not necessary for localization of myosin-2 at the leading edge. Phosphorylation is reduced following epigallocatechin-3-O-gallate treatment.

Myosin regulatory subunit that plays an important role in regulation of both smooth muscle and nonmuscle cell contractile activity via its phosphorylation. Phosphorylation triggers actin polymerization in vascular smooth muscle. Implicated in cytokinesis, receptor capping, and cell locomotion. The protein is Myosin regulatory light chain 12B (MYL12B) of Bos taurus (Bovine).